A 170-amino-acid chain; its full sequence is Transcription factor E (170 aa).

Positions 1 to 93 constitute an HTH TFE/IIEalpha-type domain; that stretch reads MKEAYLYIVE…TWYVDDDVIR (93 aa).

This sequence belongs to the TFE family. Monomer. Interaction with RNA polymerase subunits RpoF and RpoE is necessary for Tfe stimulatory transcription activity. Able to interact with Tbp and RNA polymerase in the absence of DNA promoter. Interacts both with the preinitiation and elongation complexes.

Functionally, transcription factor that plays a role in the activation of archaeal genes transcribed by RNA polymerase. Facilitates transcription initiation by enhancing TATA-box recognition by TATA-box-binding protein (Tbp), and transcription factor B (Tfb) and RNA polymerase recruitment. Not absolutely required for transcription in vitro, but particularly important in cases where Tbp or Tfb function is not optimal. It dynamically alters the nucleic acid-binding properties of RNA polymerases by stabilizing the initiation complex and destabilizing elongation complexes. Seems to translocate with the RNA polymerase following initiation and acts by binding to the non template strand of the transcription bubble in elongation complexes. The protein is Transcription factor E of Pyrobaculum neutrophilum (strain DSM 2338 / JCM 9278 / NBRC 100436 / V24Sta) (Thermoproteus neutrophilus).